The chain runs to 321 residues: Acetyl-coenzyme A carboxylase carboxyl transferase subunit alpha (321 aa).

A CoA carboxyltransferase C-terminal domain is found at 39–293 (RLQQKSQTLA…RRALGDSLRQ (255 aa)).

It belongs to the AccA family. In terms of assembly, acetyl-CoA carboxylase is a heterohexamer composed of biotin carboxyl carrier protein (AccB), biotin carboxylase (AccC) and two subunits each of ACCase subunit alpha (AccA) and ACCase subunit beta (AccD).

It is found in the cytoplasm. It catalyses the reaction N(6)-carboxybiotinyl-L-lysyl-[protein] + acetyl-CoA = N(6)-biotinyl-L-lysyl-[protein] + malonyl-CoA. The protein operates within lipid metabolism; malonyl-CoA biosynthesis; malonyl-CoA from acetyl-CoA: step 1/1. Functionally, component of the acetyl coenzyme A carboxylase (ACC) complex. First, biotin carboxylase catalyzes the carboxylation of biotin on its carrier protein (BCCP) and then the CO(2) group is transferred by the carboxyltransferase to acetyl-CoA to form malonyl-CoA. The sequence is that of Acetyl-coenzyme A carboxylase carboxyl transferase subunit alpha from Bordetella avium (strain 197N).